Reading from the N-terminus, the 1031-residue chain is Zinc finger protein 445 (1031 aa).

The interval 1 to 43 is disordered; that stretch reads MPPGRWHAAYPAQAQSSRERGRLQTVKKEEEDESYTPVQAARP. The segment covering 17 to 29 has biased composition (basic and acidic residues); sequence SRERGRLQTVKKE. Lys28 participates in a covalent cross-link: Glycyl lysine isopeptide (Lys-Gly) (interchain with G-Cter in SUMO1). Residues 55–137 enclose the SCAN box domain; that stretch reads RQLFRQLRYH…ALLEELQRDL (83 aa). Positions 234–304 constitute a KRAB domain; the sequence is MTFKDVEVTF…NMQAAQPKGN (71 aa). Residues Lys317, Lys374, Lys375, and Lys399 each participate in a glycyl lysine isopeptide (Lys-Gly) (interchain with G-Cter in SUMO2) cross-link. C2H2-type zinc fingers lie at residues 485-507, 513-535, and 541-563; these read FKCS…QRLH, FKCR…EKIH, and YKCD…RETH. A Glycyl lysine isopeptide (Lys-Gly) (interchain with G-Cter in SUMO2) cross-link involves residue Lys567. 2 consecutive C2H2-type zinc fingers follow at residues 597–619 and 625–647; these read FDCS…QRIH and YKCT…MRLH. Lys654 is covalently cross-linked (Glycyl lysine isopeptide (Lys-Gly) (interchain with G-Cter in SUMO2)). C2H2-type zinc fingers lie at residues 681 to 703 and 709 to 731; these read FLCQ…QRIH and YQCS…KKKH. Residues Lys736 and Lys758 each participate in a glycyl lysine isopeptide (Lys-Gly) (interchain with G-Cter in SUMO2) cross-link. C2H2-type zinc fingers lie at residues 762–784, 790–812, 840–862, 868–890, and 896–918; these read YKCS…QRVH, YKCR…QRIH, FWCQ…KGIH, YKCN…QRIH, and FKCQ…QRKH. The tract at residues 911-939 is disordered; the sequence is LSSHQRKHTRAAQAERSPPARSSSQDTKL. Residues Lys938, Lys956, and Lys975 each participate in a glycyl lysine isopeptide (Lys-Gly) (interchain with G-Cter in SUMO2) cross-link. 2 C2H2-type zinc fingers span residues 978 to 1000 and 1006 to 1028; these read HKCS…KRFH and FKCS…MKNH.

Belongs to the krueppel C2H2-type zinc-finger protein family.

The protein resides in the nucleus. Transcription regulator required to maintain maternal and paternal gene imprinting, a process by which gene expression is restricted in a parent of origin-specific manner by epigenetic modification of genomic DNA and chromatin, including DNA methylation. Acts by controlling DNA methylation during the earliest multicellular stages of development at multiple imprinting control regions (ICRs). Acts together with ZFP57, but seems to be the major factor in human early embryonic imprinting maintenance. In contrast, in mice, ZFP57 plays the predominant role in imprinting maintenance. This chain is Zinc finger protein 445, found in Homo sapiens (Human).